The chain runs to 415 residues: DNA double-strand break repair protein Mre11 (415 aa).

Mn(2+) is bound by residues D10, H12, D51, and N86. The Proton donor role is filled by H87. Mn(2+) contacts are provided by H174, H208, and H210.

The protein belongs to the MRE11/RAD32 family. Homodimer. Forms a heterotetramer composed of two Mre11 subunits and two Rad50 subunits. It depends on Mn(2+) as a cofactor.

With respect to regulation, nuclease activity is regulated by Rad50. In terms of biological role, part of the Rad50/Mre11 complex, which is involved in the early steps of DNA double-strand break (DSB) repair. The complex may facilitate opening of the processed DNA ends to aid in the recruitment of HerA and NurA. Mre11 binds to DSB ends and has both double-stranded 3'-5' exonuclease activity and single-stranded endonuclease activity. The chain is DNA double-strand break repair protein Mre11 from Pyrococcus abyssi (strain GE5 / Orsay).